The primary structure comprises 229 residues: Small ribosomal subunit protein uS3 (229 aa).

The KH type-2 domain occupies 18–87 (IDEYLAKQYY…NPQITITNVE (70 aa)).

It belongs to the universal ribosomal protein uS3 family. In terms of assembly, part of the 30S ribosomal subunit.

In terms of biological role, binds the lower part of the 30S subunit head. This is Small ribosomal subunit protein uS3 from Saccharolobus solfataricus (strain ATCC 35092 / DSM 1617 / JCM 11322 / P2) (Sulfolobus solfataricus).